The sequence spans 111 residues: Denmotoxin (111 aa).

A signal peptide spans 1-19; that stretch reads MKTLLLAVAVVAFVCLGSA. Positions 20–34 are excised as a propeptide; the sequence is DQLGLGRQQIDWGQG. Pyrrolidone carboxylic acid is present on Gln35. 5 disulfide bridges follow: Cys44/Cys68, Cys47/Cys55, Cys61/Cys87, Cys91/Cys102, and Cys103/Cys108.

As to quaternary structure, monomer. As to expression, expressed by the venom gland.

The protein resides in the secreted. In terms of biological role, this bird-specific postsynaptic neurotoxin irreversibly binds and inhibits the chick muscle alpha-1-beta-1-gamma-delta (CHRNA1-CHRNB1-CHRNG-CHNRD) nicotinic acetylcholine receptor (nAChR) 100-fold more compared with the mouse receptor. The weak binding to mouse receptor is reversible. This is Denmotoxin from Boiga dendrophila (Mangrove snake).